Reading from the N-terminus, the 897-residue chain is 3'-5' exonuclease DinG (897 aa).

The Exonuclease domain occupies 8–161 (VVDLETTGNQ…DEDAATTAKL (154 aa)). A Helicase ATP-binding domain is found at 241-496 (SKAVDQLGLT…KAIDQLEKQR (256 aa)). An ATP-binding site is contributed by 276 to 283 (ASLGSGKS). Positions 448-451 (DEAH) match the DEAH box motif. Residues 703 to 893 (NIDEYVASIV…QFGKLLRQIQ (191 aa)) enclose the Helicase C-terminal domain.

It belongs to the helicase family. DinG subfamily. Type 2 sub-subfamily.

Its function is as follows. 3'-5' exonuclease. The polypeptide is 3'-5' exonuclease DinG (Staphylococcus aureus (strain MSSA476)).